A 381-amino-acid chain; its full sequence is E3 ubiquitin-protein ligase RNF13 (381 aa).

An N-terminal signal peptide occupies residues 1–34; it reads MLLSIGMLMLSATQVYTILTVQLFAFLNLLPVEA. The Lumenal portion of the chain corresponds to 35–182; sequence DILAYNFENA…VPEFSLPLEY (148 aa). Residues 65–160 form the PA domain; it reads KGFLINSKPE…GESSANSLKD (96 aa). Asparagine 88 carries N-linked (GlcNAc...) asparagine glycosylation. A helical membrane pass occupies residues 183-203; sequence YLIPFLIIVGICLILIVIFMI. Residues 204–381 are Cytoplasmic-facing; that stretch reads TKFVQDRHRA…ERDYNIANTV (178 aa). Residues 240–282 form an RING-type; atypical zinc finger; that stretch reads CAICLDEYEDGDKLRILPCSHAYHCKCVDPWLTKTKKTCPVCK. The segment at 285-381 is disordered; the sequence is VVPSQGDSDS…ERDYNIANTV (97 aa). Acidic residues-rich tracts occupy residues 292 to 304 and 339 to 357; these read SDSD…EENE and SDYE…AENE.

In terms of assembly, interacts with ERN1. In terms of processing, autoubiquitinated. In terms of tissue distribution, widely expressed (at protein level). In normal pancreas, expressed in islets, but not in ducts, nor in acini (at protein level).

Its subcellular location is the endoplasmic reticulum membrane. The protein localises to the late endosome membrane. It is found in the lysosome membrane. It localises to the nucleus inner membrane. It carries out the reaction S-ubiquitinyl-[E2 ubiquitin-conjugating enzyme]-L-cysteine + [acceptor protein]-L-lysine = [E2 ubiquitin-conjugating enzyme]-L-cysteine + N(6)-ubiquitinyl-[acceptor protein]-L-lysine.. The protein operates within protein modification; protein ubiquitination. Functionally, E3 ubiquitin-protein ligase that regulates cell proliferation. Involved in apoptosis regulation. Mediates ER stress-induced activation of JNK signaling pathway and apoptosis by promoting ERN1 activation and splicing of XBP1 mRNA. Also involved in protein trafficking and localization. In Homo sapiens (Human), this protein is E3 ubiquitin-protein ligase RNF13.